Consider the following 637-residue polypeptide: Conglutin beta 5 (637 aa).

The first 30 residues, 1–30 (MAKMRVRFPMLVLLLGVVFLLAVSIGIAYG), serve as a signal peptide directing secretion. 3 stretches are compositionally biased toward basic and acidic residues: residues 33-105 (DVIK…REQE), 136-174 (RREE…REQE), and 184-203 (DYGR…REQE). 2 disordered regions span residues 33 to 221 (DVIK…YFSS) and 384 to 439 (EQED…LRSN). The Cupin type-1 1 domain occupies 217–375 (YYFSSERFQT…TFNTHYEEIQ (159 aa)). The span at 389-417 (EQRREQEQSHQDEGVIVRVSKEQIQELRK) shows a compositional bias: basic and acidic residues. Residues 434–594 (FNLRSNEPIY…IFPGSAEDVE (161 aa)) enclose the Cupin type-1 2 domain. N544 is a glycosylation site (N-linked (GlcNAc...) asparagine). Over residues 606–615 (ANAQPQQQQQ) the composition is skewed to low complexity. The disordered stretch occupies residues 606–626 (ANAQPQQQQQQREKEGRRGRR).

The protein belongs to the 7S seed storage protein family. Component of globulins complexes which accumulate in seeds.

Seed storage protein. Accumulates during seed development and is hydrolyzed after germination to provide a carbon and nitrogen source for the developing seedling. The polypeptide is Conglutin beta 5 (Lupinus angustifolius (Narrow-leaved blue lupine)).